We begin with the raw amino-acid sequence, 125 residues long: uncharacterized protein (125 aa).

Positions 14 to 112 (CPVEFTLDVI…WGESNRDVLE (99 aa)) constitute an HTH hxlR-type domain.

This is an uncharacterized protein from Bacillus subtilis (strain 168).